The following is a 107-amino-acid chain: Thioredoxin 1 (107 aa).

Residues 2–107 (SVAAAVTDAT…TLANTLDKHL (106 aa)) form the Thioredoxin domain. Cys-32 and Cys-35 are oxidised to a cystine.

This sequence belongs to the thioredoxin family.

Its function is as follows. Participates in various redox reactions through the reversible oxidation of its active center dithiol to a disulfide and catalyzes dithiol-disulfide exchange reactions. The chain is Thioredoxin 1 (trxA) from Synechococcus elongatus (strain ATCC 33912 / PCC 7942 / FACHB-805) (Anacystis nidulans R2).